The chain runs to 237 residues: Splicing factor U2AF 35 kDa subunit (237 aa).

At alanine 2 the chain carries N-acetylalanine. A C3H1-type 1 zinc finger spans residues 12 to 40; that stretch reads EKDKVNCSFYFKIGACRHGDRCSRLHNKP. Lysine 39 carries the N6-methyllysine modification. Phosphoserine occurs at positions 61 and 145. The 83-residue stretch at 65–147 folds into the RRM domain; sequence LRCAVSDVEM…QPIHAELSPV (83 aa). The C3H1-type 2 zinc-finger motif lies at 149–176; it reads DFREACCRQYEMGECTRGGFCNFMHLKP. Residue arginine 165 is modified to Omega-N-methylarginine. Positions 185 to 237 are disordered; it reads LYGRRRKKHRSRSRSRERRSRSRDRGRGGGGGGGGGRERDRRRSRDRERSGRF. Over residues 188–208 the composition is skewed to basic residues; it reads RRRKKHRSRSRSRERRSRSRD. A compositionally biased stretch (basic and acidic residues) spans 220–237; it reads GRERDRRRSRDRERSGRF.

Belongs to the splicing factor SR family. In terms of assembly, identified in the spliceosome C complex. Heterodimer with U2AF2. Interacts (via RS domain) with PHF5A (via N-terminus). Interacts with ZRANB2. Interacts with SDE2. Interacts with SF3B1.

Its subcellular location is the nucleus. The protein localises to the nucleus speckle. Plays a critical role in both constitutive and enhancer-dependent splicing by mediating protein-protein interactions and protein-RNA interactions required for accurate 3'-splice site selection. Recruits U2 snRNP to the branch point. Directly mediates interactions between U2AF2 and proteins bound to the enhancers and thus may function as a bridge between U2AF2 and the enhancer complex to recruit it to the adjacent intron. This is Splicing factor U2AF 35 kDa subunit (U2AF1) from Bos taurus (Bovine).